Reading from the N-terminus, the 74-residue chain is Small cysteine-rich protein 8 (74 aa).

Positions 1–21 (MAAKFHLCLLLIILGTITVQG) are cleaved as a signal peptide. Positions 22–31 (ARHPGKPHFF) are excised as a propeptide.

It belongs to the Cnidaria small cysteine-rich protein (SCRiP) family. beta subfamily. Post-translationally, contains 4 disulfide bonds.

The protein localises to the secreted. It is found in the nematocyst. Functionally, induces neurotoxic symptoms on zebrafish. Has also been claimed to be implied in calcification, but tests on homolog proteins suggest that proteins of this family have a neurotoxic function and not a calcification function. The sequence is that of Small cysteine-rich protein 8 from Orbicella faveolata (Mountainous star coral).